A 565-amino-acid polypeptide reads, in one-letter code: Proline--tRNA ligase (565 aa).

The protein belongs to the class-II aminoacyl-tRNA synthetase family. ProS type 1 subfamily. Homodimer.

The protein resides in the cytoplasm. The enzyme catalyses tRNA(Pro) + L-proline + ATP = L-prolyl-tRNA(Pro) + AMP + diphosphate. Catalyzes the attachment of proline to tRNA(Pro) in a two-step reaction: proline is first activated by ATP to form Pro-AMP and then transferred to the acceptor end of tRNA(Pro). As ProRS can inadvertently accommodate and process non-cognate amino acids such as alanine and cysteine, to avoid such errors it has two additional distinct editing activities against alanine. One activity is designated as 'pretransfer' editing and involves the tRNA(Pro)-independent hydrolysis of activated Ala-AMP. The other activity is designated 'posttransfer' editing and involves deacylation of mischarged Ala-tRNA(Pro). The misacylated Cys-tRNA(Pro) is not edited by ProRS. This chain is Proline--tRNA ligase, found in Lactobacillus delbrueckii subsp. bulgaricus (strain ATCC 11842 / DSM 20081 / BCRC 10696 / JCM 1002 / NBRC 13953 / NCIMB 11778 / NCTC 12712 / WDCM 00102 / Lb 14).